The sequence spans 448 residues: Chromosomal replication initiator protein DnaA (448 aa).

A domain I, interacts with DnaA modulators region spans residues 1 to 72 (MPDLQELWNY…VEGAYEFAEI (72 aa)). Residues 72-110 (IELTPIFVLPGESDNLTPLEPEEEHVLTKAETPTFLRET) are domain II. The tract at residues 111 to 327 (HLNSKYTFDT…GALVRVQAYA (217 aa)) is domain III, AAA+ region. 4 residues coordinate ATP: Gly155, Gly157, Lys158, and Thr159. The segment at 328-448 (TMQNAEITTS…ILDLKNTMKS (121 aa)) is domain IV, binds dsDNA.

Belongs to the DnaA family. In terms of assembly, oligomerizes as a right-handed, spiral filament on DNA at oriC.

It is found in the cytoplasm. Plays an essential role in the initiation and regulation of chromosomal replication. ATP-DnaA binds to the origin of replication (oriC) to initiate formation of the DNA replication initiation complex once per cell cycle. Binds the DnaA box (a 9 base pair repeat at the origin) and separates the double-stranded (ds)DNA. Forms a right-handed helical filament on oriC DNA; dsDNA binds to the exterior of the filament while single-stranded (ss)DNA is stabiized in the filament's interior. The ATP-DnaA-oriC complex binds and stabilizes one strand of the AT-rich DNA unwinding element (DUE), permitting loading of DNA polymerase. After initiation quickly degrades to an ADP-DnaA complex that is not apt for DNA replication. Binds acidic phospholipids. This Latilactobacillus sakei subsp. sakei (strain 23K) (Lactobacillus sakei subsp. sakei) protein is Chromosomal replication initiator protein DnaA.